The primary structure comprises 322 residues: Cysteine synthase (322 aa).

Hydrogen sulfide is bound by residues Asn-8 and Arg-35. Lys-42 carries the N6-(pyridoxal phosphate)lysine modification. Pyridoxal 5'-phosphate-binding positions include Asn-72 and 177-181 (GTGGT). Residue Leu-269 participates in hydrogen sulfide binding. Ser-273 is a binding site for pyridoxal 5'-phosphate.

Belongs to the cysteine synthase/cystathionine beta-synthase family. In terms of assembly, homodimer. The cofactor is pyridoxal 5'-phosphate.

The catalysed reaction is O-acetyl-L-serine + hydrogen sulfide = L-cysteine + acetate. The protein operates within amino-acid biosynthesis; L-cysteine biosynthesis; L-cysteine from L-serine: step 2/2. The chain is Cysteine synthase (cysK) from Buchnera aphidicola subsp. Schizaphis graminum (strain Sg).